The following is an 891-amino-acid chain: Aconitate hydratase A (891 aa).

The [4Fe-4S] cluster site is built by cysteine 435, cysteine 501, and cysteine 504.

It belongs to the aconitase/IPM isomerase family. Monomer. The cofactor is [4Fe-4S] cluster.

It catalyses the reaction citrate = D-threo-isocitrate. It carries out the reaction (2S,3R)-3-hydroxybutane-1,2,3-tricarboxylate = 2-methyl-cis-aconitate + H2O. It functions in the pathway carbohydrate metabolism; tricarboxylic acid cycle; isocitrate from oxaloacetate: step 2/2. It participates in organic acid metabolism; propanoate degradation. Involved in the catabolism of short chain fatty acids (SCFA) via the tricarboxylic acid (TCA)(acetyl degradation route) and the 2-methylcitrate cycle I (propionate degradation route). Catalyzes the reversible isomerization of citrate to isocitrate via cis-aconitate. Also catalyzes the hydration of 2-methyl-cis-aconitate to yield (2R,3S)-2-methylisocitrate. The (2S,3S)-2-methylcitrate (2-MC) is a very poor substrate. The apo form of AcnA functions as a RNA-binding regulatory protein. The chain is Aconitate hydratase A (acnA) from Salmonella typhimurium (strain LT2 / SGSC1412 / ATCC 700720).